The following is a 123-amino-acid chain: ATP synthase epsilon chain (123 aa).

The segment at 96-123 (ESRKQSAETEHDKAVAESELRAVKRMEA) is disordered.

The protein belongs to the ATPase epsilon chain family. F-type ATPases have 2 components, CF(1) - the catalytic core - and CF(0) - the membrane proton channel. CF(1) has five subunits: alpha(3), beta(3), gamma(1), delta(1), epsilon(1). CF(0) has three main subunits: a, b and c.

Its subcellular location is the cell membrane. Produces ATP from ADP in the presence of a proton gradient across the membrane. The protein is ATP synthase epsilon chain of Corynebacterium jeikeium (strain K411).